The sequence spans 91 residues: Probable Fe(2+)-trafficking protein (91 aa).

Belongs to the Fe(2+)-trafficking protein family. Monomer.

In terms of biological role, could be a mediator in iron transactions between iron acquisition and iron-requiring processes, such as synthesis and/or repair of Fe-S clusters in biosynthetic enzymes. This Escherichia coli O7:K1 (strain IAI39 / ExPEC) protein is Probable Fe(2+)-trafficking protein.